The following is a 418-amino-acid chain: Tyrosine--tRNA ligase (418 aa).

Y34 is a binding site for L-tyrosine. The short motif at 39 to 48 (PTADSLHLGH) is the 'HIGH' region element. L-tyrosine-binding residues include Y169 and Q173. Positions 229 to 233 (KFGKS) match the 'KMSKS' region motif. ATP is bound at residue K232. An S4 RNA-binding domain is found at 352–410 (LNIVELLVTSGIVNSKRQAREDVQNGAIYVNGERVQDLDYTLSDSDKIDGELTVIRRGK).

It belongs to the class-I aminoacyl-tRNA synthetase family. TyrS type 1 subfamily. In terms of assembly, homodimer.

Its subcellular location is the cytoplasm. It carries out the reaction tRNA(Tyr) + L-tyrosine + ATP = L-tyrosyl-tRNA(Tyr) + AMP + diphosphate + H(+). Functionally, catalyzes the attachment of tyrosine to tRNA(Tyr) in a two-step reaction: tyrosine is first activated by ATP to form Tyr-AMP and then transferred to the acceptor end of tRNA(Tyr). The polypeptide is Tyrosine--tRNA ligase (Streptococcus suis (strain 98HAH33)).